The chain runs to 686 residues: Phosphomethylpyrimidine synthase (686 aa).

Substrate is bound by residues asparagine 235, methionine 264, tyrosine 293, histidine 329, 349–351 (SRG), 390–393 (DGMR), and glutamate 429. Histidine 433 is a binding site for Zn(2+). Residue tyrosine 456 participates in substrate binding. Histidine 497 contacts Zn(2+). [4Fe-4S] cluster-binding residues include cysteine 577, cysteine 580, and cysteine 585. The interval 659 to 686 (IDSSGINDNKNDQQDASVVRVPSLEIEG) is disordered.

Belongs to the ThiC family. In terms of assembly, homodimer. [4Fe-4S] cluster is required as a cofactor.

The enzyme catalyses 5-amino-1-(5-phospho-beta-D-ribosyl)imidazole + S-adenosyl-L-methionine = 4-amino-2-methyl-5-(phosphooxymethyl)pyrimidine + CO + 5'-deoxyadenosine + formate + L-methionine + 3 H(+). Its pathway is cofactor biosynthesis; thiamine diphosphate biosynthesis. In terms of biological role, catalyzes the synthesis of the hydroxymethylpyrimidine phosphate (HMP-P) moiety of thiamine from aminoimidazole ribotide (AIR) in a radical S-adenosyl-L-methionine (SAM)-dependent reaction. The sequence is that of Phosphomethylpyrimidine synthase from Shewanella denitrificans (strain OS217 / ATCC BAA-1090 / DSM 15013).